Reading from the N-terminus, the 606-residue chain is Electron transfer flavoprotein-ubiquinone oxidoreductase, mitochondrial (606 aa).

Residue 59–73 (VVIVGAGPSGLSTAI) participates in FAD binding. Residues 448 to 468 (PSLHWGTIPGLIYGALEMYIF) traverse the membrane as a helical segment. [4Fe-4S] cluster contacts are provided by Cys551, Cys575, Cys578, and Cys581.

It belongs to the ETF-QO/FixC family. Monomer. Requires [4Fe-4S] cluster as cofactor. The cofactor is FAD.

It is found in the mitochondrion inner membrane. It carries out the reaction a ubiquinone + reduced [electron-transfer flavoprotein] = a ubiquinol + oxidized [electron-transfer flavoprotein] + H(+). Functionally, accepts electrons from ETF and reduces ubiquinone. The polypeptide is Electron transfer flavoprotein-ubiquinone oxidoreductase, mitochondrial (etfdh) (Dictyostelium discoideum (Social amoeba)).